A 289-amino-acid chain; its full sequence is G1/S-specific cyclin-D2 (289 aa).

A Cyclin N-terminal domain is found at 26–151 (VLQNLLTIEE…VVLGKLKWNL (126 aa)). Residues 264–289 (DQRDGSKSEDELDQASTPTDVRDIDL) are disordered. At S271 the chain carries Phosphoserine. T280 carries the post-translational modification Phosphothreonine.

Belongs to the cyclin family. Cyclin D subfamily. In terms of assembly, interacts with either CDK4 or CDK6 protein kinase to form a serine/threonine kinase holoenzyme complex. The cyclin subunit imparts substrate specificity to the complex. Post-translationally, phosphorylation at Thr-280 by MAP kinases is required for ubiquitination and degradation by the DCX(AMBRA1) complex. In terms of processing, ubiquitinated by the DCX(AMBRA1) complex during the transition from G1 to S cell phase, leading to its degradation: ubiquitination is dependent on Thr-280 phosphorylation. The DCX(AMBRA1) complex represents the major regulator of CCND2 stability during the G1/S transition. Polyubiquitinated by the SCF(FBXL2) complex, leading to proteasomal degradation.

The protein resides in the nucleus. It localises to the cytoplasm. It is found in the nucleus membrane. Its function is as follows. Regulatory component of the cyclin D2-CDK4 (DC) complex that phosphorylates and inhibits members of the retinoblastoma (RB) protein family including RB1 and regulates the cell-cycle during G(1)/S transition. Phosphorylation of RB1 allows dissociation of the transcription factor E2F from the RB/E2F complex and the subsequent transcription of E2F target genes which are responsible for the progression through the G(1) phase. Hypophosphorylates RB1 in early G(1) phase. Cyclin D-CDK4 complexes are major integrators of various mitogenenic and antimitogenic signals. The sequence is that of G1/S-specific cyclin-D2 from Homo sapiens (Human).